Consider the following 367-residue polypeptide: Glutamate 5-kinase (367 aa).

ATP is bound at residue lysine 10. Substrate is bound by residues serine 50, aspartate 137, and asparagine 149. ATP contacts are provided by residues 169-170 (TD) and 211-217 (TGGMGTK). The PUA domain occupies 275–353 (AGELTVDAGA…QQIDAILGYE (79 aa)).

The protein belongs to the glutamate 5-kinase family.

The protein resides in the cytoplasm. The catalysed reaction is L-glutamate + ATP = L-glutamyl 5-phosphate + ADP. The protein operates within amino-acid biosynthesis; L-proline biosynthesis; L-glutamate 5-semialdehyde from L-glutamate: step 1/2. Functionally, catalyzes the transfer of a phosphate group to glutamate to form L-glutamate 5-phosphate. This is Glutamate 5-kinase from Klebsiella pneumoniae (strain 342).